We begin with the raw amino-acid sequence, 81 residues long: WAP four-disulfide core domain protein 13 (81 aa).

An N-terminal signal peptide occupies residues 1 to 22 (MRPVSPLQLLLVLSLAPQPVLG). One can recognise a WAP domain in the interval 31–74 (YILEPPPCRSEPGACNMFCTQQEECPEPLQCCSAYCGIVCTSNQ). 4 disulfide bridges follow: Cys38–Cys62, Cys45–Cys66, Cys49–Cys61, and Cys55–Cys70.

The protein resides in the secreted. In terms of biological role, putative acid-stable proteinase inhibitor. This chain is WAP four-disulfide core domain protein 13 (Wfdc13), found in Mus musculus (Mouse).